Reading from the N-terminus, the 545-residue chain is Capsular polysaccharide phosphotransferase SacB (545 aa).

This sequence belongs to the stealth family.

Its function is as follows. May be the polymerase that links individual UDP-N-acetyl-D-mannosamine monomers. In serotype A the capsule is composed of repeated units of (alpha 1-6)-linked N-acetyl-D-mannosamine-1-phosphate. The sequence is that of Capsular polysaccharide phosphotransferase SacB (sacB) from Neisseria meningitidis serogroup A.